The sequence spans 166 residues: Ribosome maturation factor RimM (166 aa).

The region spanning 94–166 (GDEYYWRDLM…EMVVRLLPGL (73 aa)) is the PRC barrel domain.

This sequence belongs to the RimM family. Binds ribosomal protein uS19.

The protein resides in the cytoplasm. In terms of biological role, an accessory protein needed during the final step in the assembly of 30S ribosomal subunit, possibly for assembly of the head region. Essential for efficient processing of 16S rRNA. May be needed both before and after RbfA during the maturation of 16S rRNA. It has affinity for free ribosomal 30S subunits but not for 70S ribosomes. The chain is Ribosome maturation factor RimM from Syntrophus aciditrophicus (strain SB).